We begin with the raw amino-acid sequence, 693 residues long: Polyribonucleotide nucleotidyltransferase (693 aa).

Mg(2+)-binding residues include Asp485 and Asp491. The KH domain maps to 552-611; sequence PRIETMQINTSKIATVIGPGGKQIRQIIERSGAQVDINDNGLINISANTQESIDKAKELI. Residues 621 to 689 enclose the S1 motif domain; it reads GKIYNGRVTS…EKGQLKLSHK (69 aa).

The protein belongs to the polyribonucleotide nucleotidyltransferase family. Mg(2+) is required as a cofactor.

Its subcellular location is the cytoplasm. It catalyses the reaction RNA(n+1) + phosphate = RNA(n) + a ribonucleoside 5'-diphosphate. Functionally, involved in mRNA degradation. Catalyzes the phosphorolysis of single-stranded polyribonucleotides processively in the 3'- to 5'-direction. The polypeptide is Polyribonucleotide nucleotidyltransferase (Chlamydia muridarum (strain MoPn / Nigg)).